An 862-amino-acid chain; its full sequence is FAS1 domain-containing protein YLR001C (862 aa).

The signal sequence occupies residues 1–23 (MNMAIQTIKYIFWLLPILGLTQA). The Vacuolar segment spans residues 24–762 (LLQNPGDDFP…KYHLRLPGIA (739 aa)). In terms of domain architecture, FAS1 1 spans 34–162 (FSTVIDILSE…ASLQGINNLL (129 aa)). 13 N-linked (GlcNAc...) asparagine glycosylation sites follow: N68, N112, N152, N200, N291, N333, N450, N521, N542, N569, N663, N679, and N688. FAS1 domains are found at residues 463–604 (PGDL…DQLD) and 606–744 (PVDL…DKPI). The chain crosses the membrane as a helical span at residues 763 to 783 (VGFGVIIGVTIAISLLFCIII). The Cytoplasmic portion of the chain corresponds to 784-862 (TRGGKVKDKN…QKGGRSVSTS (79 aa)).

The protein localises to the vacuole membrane. This Saccharomyces cerevisiae (strain ATCC 204508 / S288c) (Baker's yeast) protein is FAS1 domain-containing protein YLR001C.